A 405-amino-acid chain; its full sequence is 4-hydroxy-3-methylbut-2-enyl diphosphate reductase (405 aa).

Position 66 (cysteine 66) interacts with [4Fe-4S] cluster. Histidine 96 is a binding site for (2E)-4-hydroxy-3-methylbut-2-enyl diphosphate. Histidine 96 provides a ligand contact to dimethylallyl diphosphate. Residue histidine 96 participates in isopentenyl diphosphate binding. Cysteine 157 is a binding site for [4Fe-4S] cluster. Histidine 185 lines the (2E)-4-hydroxy-3-methylbut-2-enyl diphosphate pocket. Dimethylallyl diphosphate is bound at residue histidine 185. Histidine 185 is an isopentenyl diphosphate binding site. The active-site Proton donor is the glutamate 187. Threonine 250 is a (2E)-4-hydroxy-3-methylbut-2-enyl diphosphate binding site. Cysteine 288 provides a ligand contact to [4Fe-4S] cluster. Residues serine 317, serine 318, asparagine 319, and serine 380 each contribute to the (2E)-4-hydroxy-3-methylbut-2-enyl diphosphate site. Positions 317, 318, 319, and 380 each coordinate dimethylallyl diphosphate. Residues serine 317, serine 318, asparagine 319, and serine 380 each coordinate isopentenyl diphosphate.

This sequence belongs to the IspH family. It depends on [4Fe-4S] cluster as a cofactor.

It catalyses the reaction isopentenyl diphosphate + 2 oxidized [2Fe-2S]-[ferredoxin] + H2O = (2E)-4-hydroxy-3-methylbut-2-enyl diphosphate + 2 reduced [2Fe-2S]-[ferredoxin] + 2 H(+). The catalysed reaction is dimethylallyl diphosphate + 2 oxidized [2Fe-2S]-[ferredoxin] + H2O = (2E)-4-hydroxy-3-methylbut-2-enyl diphosphate + 2 reduced [2Fe-2S]-[ferredoxin] + 2 H(+). Its pathway is isoprenoid biosynthesis; dimethylallyl diphosphate biosynthesis; dimethylallyl diphosphate from (2E)-4-hydroxy-3-methylbutenyl diphosphate: step 1/1. The protein operates within isoprenoid biosynthesis; isopentenyl diphosphate biosynthesis via DXP pathway; isopentenyl diphosphate from 1-deoxy-D-xylulose 5-phosphate: step 6/6. In terms of biological role, catalyzes the conversion of 1-hydroxy-2-methyl-2-(E)-butenyl 4-diphosphate (HMBPP) into a mixture of isopentenyl diphosphate (IPP) and dimethylallyl diphosphate (DMAPP). Acts in the terminal step of the DOXP/MEP pathway for isoprenoid precursor biosynthesis. This chain is 4-hydroxy-3-methylbut-2-enyl diphosphate reductase, found in Prochlorococcus marinus (strain SARG / CCMP1375 / SS120).